Consider the following 317-residue polypeptide: Acetyl-coenzyme A carboxylase carboxyl transferase subunit alpha (317 aa).

One can recognise a CoA carboxyltransferase C-terminal domain in the interval 40-293 (LEKRSADALK…GDIIAASLRS (254 aa)).

The protein belongs to the AccA family. As to quaternary structure, acetyl-CoA carboxylase is a heterohexamer composed of biotin carboxyl carrier protein (AccB), biotin carboxylase (AccC) and two subunits each of ACCase subunit alpha (AccA) and ACCase subunit beta (AccD).

Its subcellular location is the cytoplasm. It carries out the reaction N(6)-carboxybiotinyl-L-lysyl-[protein] + acetyl-CoA = N(6)-biotinyl-L-lysyl-[protein] + malonyl-CoA. Its pathway is lipid metabolism; malonyl-CoA biosynthesis; malonyl-CoA from acetyl-CoA: step 1/1. Functionally, component of the acetyl coenzyme A carboxylase (ACC) complex. First, biotin carboxylase catalyzes the carboxylation of biotin on its carrier protein (BCCP) and then the CO(2) group is transferred by the carboxyltransferase to acetyl-CoA to form malonyl-CoA. This is Acetyl-coenzyme A carboxylase carboxyl transferase subunit alpha from Brucella melitensis biotype 2 (strain ATCC 23457).